The primary structure comprises 197 residues: MRIAILGGTYNPIHIGHIFLAKEIEFLLNIDKVIFIPTCNPAHKLISEDVTVQNRIDMLKLALENENKILIDDCDIINGGITYTVDTISCVKKKYKNDKLFLVIGDDLFQNFDSWKDPQSIVSSVDLVVAHRIYKERLKSSFKHIYIDNKIIPISSSEIRNRIANGLPVSYLLPCSVLKYIKDNNLYVKKVNICERI.

Belongs to the NadD family.

It carries out the reaction nicotinate beta-D-ribonucleotide + ATP + H(+) = deamido-NAD(+) + diphosphate. It participates in cofactor biosynthesis; NAD(+) biosynthesis; deamido-NAD(+) from nicotinate D-ribonucleotide: step 1/1. Catalyzes the reversible adenylation of nicotinate mononucleotide (NaMN) to nicotinic acid adenine dinucleotide (NaAD). In Borrelia garinii subsp. bavariensis (strain ATCC BAA-2496 / DSM 23469 / PBi) (Borreliella bavariensis), this protein is Probable nicotinate-nucleotide adenylyltransferase.